We begin with the raw amino-acid sequence, 124 residues long: UPF0375 protein Y45F10C.4 (124 aa).

A signal peptide spans 1 to 23 (MNFLPSTVLLLSFVVAIISGSFS). 2 N-linked (GlcNAc...) asparagine glycosylation sites follow: asparagine 36 and asparagine 62.

It belongs to the UPF0375 family.

The protein resides in the secreted. In Caenorhabditis elegans, this protein is UPF0375 protein Y45F10C.4.